We begin with the raw amino-acid sequence, 382 residues long: N-acetylglucosamine-6-phosphate deacetylase (382 aa).

Glutamate 131 lines the a divalent metal cation pocket. Substrate is bound at residue 142-143; the sequence is TH. A divalent metal cation is bound by residues histidine 195 and histidine 216. Residues 219-220, arginine 227, and 248-251 each bind substrate; these read NA and DGLH. Catalysis depends on aspartate 273, which acts as the Proton donor/acceptor. 306 to 308 serves as a coordination point for substrate; sequence LSG.

It belongs to the metallo-dependent hydrolases superfamily. NagA family. In terms of assembly, homotetramer. A divalent metal cation is required as a cofactor.

It carries out the reaction N-acetyl-D-glucosamine 6-phosphate + H2O = D-glucosamine 6-phosphate + acetate. Its pathway is amino-sugar metabolism; N-acetylneuraminate degradation; D-fructose 6-phosphate from N-acetylneuraminate: step 4/5. Functionally, involved in the first committed step in the biosynthesis of amino-sugar-nucleotides. Catalyzes the hydrolysis of the N-acetyl group of N-acetylglucosamine-6-phosphate (GlcNAc-6-P) to yield glucosamine 6-phosphate and acetate. Can probably also catalyze the deacetylation of N-acetyl-D-galactosamine 6-phosphate to D-galactosamine 6-phosphate. This Escherichia coli O157:H7 protein is N-acetylglucosamine-6-phosphate deacetylase (nagA).